Here is a 734-residue protein sequence, read N- to C-terminus: Ribosomal biogenesis protein LAS1L (734 aa).

The segment at 204–255 (EGIEEEDQEEDKNIVVDDITEQKPEPQDDGKSTESDVKADGDSKGSEEVDSH) is disordered. Basic and acidic residues predominate over residues 214 to 255 (DKNIVVDDITEQKPEPQDDGKSTESDVKADGDSKGSEEVDSH). Residues Lys-215 and Lys-226 each participate in a glycyl lysine isopeptide (Lys-Gly) (interchain with G-Cter in SUMO2) cross-link. A phosphoserine mark is found at Ser-441, Ser-523, and Ser-560. Over residues 547–561 (GSEAKAQQQEEQGSV) the composition is skewed to polar residues. Residues 547-619 (GSEAKAQQQE…PFSTGQESPT (73 aa)) form a disordered region. The span at 563 to 575 (DVKEEEKEEKEVL) shows a compositional bias: basic and acidic residues. The segment covering 578–605 (QVEEEEENDDQEEEEEDEDDEDDEEEDR) has biased composition (acidic residues). Ser-617 bears the Phosphoserine mark. The interaction with NOL9 stretch occupies residues 636–655 (SAWQVSSEDVRWDTFPLGRM).

Belongs to the LAS1 family. As to quaternary structure, component of some MLL1/MLL complex, at least composed of the core components KMT2A/MLL1, ASH2L, HCFC1/HCF1, WDR5 and RBBP5, as well as the facultative components BACC1, CHD8, E2F6, HSP70, INO80C, KANSL1, LAS1L, MAX, MCRS1, MGA, KAT8/MOF, PELP1, PHF20, PRP31, RING2, RUVB1/TIP49A, RUVB2/TIP49B, SENP3, TAF1, TAF4, TAF6, TAF7, TAF9 and TEX10. Component of the 5FMC complex, at least composed of PELP1, LAS1L, TEX10, WDR18 and SENP3; the complex interacts with methylated CHTOP and ZNF148. Interacts with NOL9 to form an ITS2 pre-rRNA endonuclease-kinase complex.

It localises to the nucleus. The protein localises to the nucleolus. Its subcellular location is the nucleoplasm. The protein resides in the cytoplasm. In terms of biological role, required for the synthesis of the 60S ribosomal subunit and maturation of the 28S rRNA. Functions as a component of the Five Friends of Methylated CHTOP (5FMC) complex; the 5FMC complex is recruited to ZNF148 by methylated CHTOP, leading to desumoylation of ZNF148 and subsequent transactivation of ZNF148 target genes. Required for the efficient pre-rRNA processing at both ends of internal transcribed spacer 2 (ITS2). The protein is Ribosomal biogenesis protein LAS1L (LAS1L) of Homo sapiens (Human).